Reading from the N-terminus, the 283-residue chain is Pantothenate synthetase (283 aa).

Methionine 26–histidine 33 lines the ATP pocket. Residue histidine 33 is the Proton donor of the active site. Glutamine 57 provides a ligand contact to (R)-pantoate. Glutamine 57 provides a ligand contact to beta-alanine. An ATP-binding site is contributed by glycine 148–aspartate 151. Residue glutamine 154 participates in (R)-pantoate binding. Residue leucine 185–arginine 188 participates in ATP binding.

The protein belongs to the pantothenate synthetase family. Homodimer.

Its subcellular location is the cytoplasm. The enzyme catalyses (R)-pantoate + beta-alanine + ATP = (R)-pantothenate + AMP + diphosphate + H(+). It participates in cofactor biosynthesis; (R)-pantothenate biosynthesis; (R)-pantothenate from (R)-pantoate and beta-alanine: step 1/1. Functionally, catalyzes the condensation of pantoate with beta-alanine in an ATP-dependent reaction via a pantoyl-adenylate intermediate. The protein is Pantothenate synthetase of Polaromonas naphthalenivorans (strain CJ2).